Here is a 96-residue protein sequence, read N- to C-terminus: Signal recognition particle 19 kDa protein (96 aa).

The protein belongs to the SRP19 family. As to quaternary structure, part of the signal recognition particle protein translocation system, which is composed of SRP and FtsY. Archaeal SRP consists of a 7S RNA molecule of 300 nucleotides and two protein subunits: SRP54 and SRP19.

Its subcellular location is the cytoplasm. In terms of biological role, involved in targeting and insertion of nascent membrane proteins into the cytoplasmic membrane. Binds directly to 7S RNA and mediates binding of the 54 kDa subunit of the SRP. In Pyrobaculum arsenaticum (strain DSM 13514 / JCM 11321 / PZ6), this protein is Signal recognition particle 19 kDa protein.